The following is a 336-amino-acid chain: MKERIVNLETLDFETSQEVSLRPNLWEDFIGQEKIKSNLQISICAAKKRQESLDHMLFFGPPGLGKTSISHIIAKEMETNIKITAAPMIEKSGDLAAILTNLQAKDILFIDEIHRLSPAIEEVLYPAMEDFRLDIIIGSGPAAQTIKIDLPPFTLIGATTRAGMLSNPLRDRFGMSFRMQFYSPSELALIIKKAAVKLNQDIKEESADEIAKRSRGTPRIALRLLKRVRDFALVKNSSLMDLNITLHALNELGVNELGFDEADLAYLSLLANAQGKPVGLNTIAASMREDEGTIEDMIEPFLLANGYLERTAKGRIATPKTHALLKIPTLKSQTLF.

The segment at 1 to 182 (MKERIVNLET…FGMSFRMQFY (182 aa)) is large ATPase domain (RuvB-L). Residues leucine 21, arginine 22, glycine 63, lysine 66, threonine 67, serine 68, 129–131 (EDF), arginine 172, tyrosine 182, and arginine 219 contribute to the ATP site. A Mg(2+)-binding site is contributed by threonine 67. The segment at 183 to 253 (SPSELALIIK…ITLHALNELG (71 aa)) is small ATPAse domain (RuvB-S). The tract at residues 256 to 336 (ELGFDEADLA…IPTLKSQTLF (81 aa)) is head domain (RuvB-H). 2 residues coordinate DNA: arginine 310 and arginine 315.

This sequence belongs to the RuvB family. Homohexamer. Forms an RuvA(8)-RuvB(12)-Holliday junction (HJ) complex. HJ DNA is sandwiched between 2 RuvA tetramers; dsDNA enters through RuvA and exits via RuvB. An RuvB hexamer assembles on each DNA strand where it exits the tetramer. Each RuvB hexamer is contacted by two RuvA subunits (via domain III) on 2 adjacent RuvB subunits; this complex drives branch migration. In the full resolvosome a probable DNA-RuvA(4)-RuvB(12)-RuvC(2) complex forms which resolves the HJ.

The protein resides in the cytoplasm. The catalysed reaction is ATP + H2O = ADP + phosphate + H(+). The RuvA-RuvB-RuvC complex processes Holliday junction (HJ) DNA during genetic recombination and DNA repair, while the RuvA-RuvB complex plays an important role in the rescue of blocked DNA replication forks via replication fork reversal (RFR). RuvA specifically binds to HJ cruciform DNA, conferring on it an open structure. The RuvB hexamer acts as an ATP-dependent pump, pulling dsDNA into and through the RuvAB complex. RuvB forms 2 homohexamers on either side of HJ DNA bound by 1 or 2 RuvA tetramers; 4 subunits per hexamer contact DNA at a time. Coordinated motions by a converter formed by DNA-disengaged RuvB subunits stimulates ATP hydrolysis and nucleotide exchange. Immobilization of the converter enables RuvB to convert the ATP-contained energy into a lever motion, pulling 2 nucleotides of DNA out of the RuvA tetramer per ATP hydrolyzed, thus driving DNA branch migration. The RuvB motors rotate together with the DNA substrate, which together with the progressing nucleotide cycle form the mechanistic basis for DNA recombination by continuous HJ branch migration. Branch migration allows RuvC to scan DNA until it finds its consensus sequence, where it cleaves and resolves cruciform DNA. The polypeptide is Holliday junction branch migration complex subunit RuvB (Helicobacter pylori (strain G27)).